We begin with the raw amino-acid sequence, 159 residues long: Sec-independent protein translocase protein TatB (159 aa).

The helical transmembrane segment at Met-1–Gly-21 threads the bilayer.

The protein belongs to the TatB family. The Tat system comprises two distinct complexes: a TatABC complex, containing multiple copies of TatA, TatB and TatC subunits, and a separate TatA complex, containing only TatA subunits. Substrates initially bind to the TatABC complex, which probably triggers association of the separate TatA complex to form the active translocon.

The protein localises to the cell inner membrane. In terms of biological role, part of the twin-arginine translocation (Tat) system that transports large folded proteins containing a characteristic twin-arginine motif in their signal peptide across membranes. Together with TatC, TatB is part of a receptor directly interacting with Tat signal peptides. TatB may form an oligomeric binding site that transiently accommodates folded Tat precursor proteins before their translocation. The protein is Sec-independent protein translocase protein TatB of Acidovorax sp. (strain JS42).